A 428-amino-acid chain; its full sequence is Serine--tRNA ligase (428 aa).

L-serine is bound at residue 236–238 (TAE). 267 to 269 (RSE) contributes to the ATP binding site. Glutamate 290 contributes to the L-serine binding site. 354–357 (EISS) serves as a coordination point for ATP. Serine 388 provides a ligand contact to L-serine.

It belongs to the class-II aminoacyl-tRNA synthetase family. Type-1 seryl-tRNA synthetase subfamily. As to quaternary structure, homodimer. The tRNA molecule binds across the dimer.

Its subcellular location is the cytoplasm. The enzyme catalyses tRNA(Ser) + L-serine + ATP = L-seryl-tRNA(Ser) + AMP + diphosphate + H(+). It carries out the reaction tRNA(Sec) + L-serine + ATP = L-seryl-tRNA(Sec) + AMP + diphosphate + H(+). Its pathway is aminoacyl-tRNA biosynthesis; selenocysteinyl-tRNA(Sec) biosynthesis; L-seryl-tRNA(Sec) from L-serine and tRNA(Sec): step 1/1. In terms of biological role, catalyzes the attachment of serine to tRNA(Ser). Is also able to aminoacylate tRNA(Sec) with serine, to form the misacylated tRNA L-seryl-tRNA(Sec), which will be further converted into selenocysteinyl-tRNA(Sec). In Psychrobacter cryohalolentis (strain ATCC BAA-1226 / DSM 17306 / VKM B-2378 / K5), this protein is Serine--tRNA ligase.